Here is a 1178-residue protein sequence, read N- to C-terminus: Niemann-Pick type C1-related protein (1178 aa).

Asn41 carries N-linked (GlcNAc...) asparagine glycosylation. 2 helical membrane passes run 157 to 177 (PWLFIMVSLLATAGMSVGIFL) and 412 to 432 (VVEWLRLCAAVLVVFLYTSVV). The SSD domain maps to 414-570 (EWLRLCAAVL…LTFFLAGLSL (157 aa)). The N-linked (GlcNAc...) asparagine glycan is linked to Asn433. The next 4 helical transmembrane spans lie at 448 to 468 (GALASLLGYLGGAGLVYLCGV), 478 to 498 (PFLAIGIGVDDLFVIINAYSL), 516 to 536 (AGLSITITTLTNVITFIIGAL), and 545 to 565 (FCIITAGALTWGYVLCLTFFL). An N-linked (GlcNAc...) asparagine glycan is attached at Asn621. Residues 789 to 809 (ATVLVIFAAVTALAIYGATTL) form a helical membrane-spanning segment. N-linked (GlcNAc...) asparagine glycans are attached at residues Asn917 and Asn943. Transmembrane regions (helical) follow at residues 986-1006 (FTLTNLSIALVCILAISLLLI), 1013-1033 (IIVVLVVSLVDLWLFGFMALI), 1037-1057 (LSMISMVNLLISIGYSVDFTI), 1080-1100 (IVMGAPVTHGMLSTLLSILAL), and 1114-1134 (MMFMVIVFAYTAGMVLLPVVL).

It belongs to the patched family.

It localises to the inner membrane complex. It carries out the reaction cholesterol(in) = cholesterol(out). Its function is as follows. Likely facilitates the efflux of cholesterol and gangliosides from membranes. Plays a role in the regulation of lipid homeostasis. The polypeptide is Niemann-Pick type C1-related protein (Toxoplasma gondii (strain ATCC 50611 / Me49)).